The following is a 366-amino-acid chain: Lipase member J (366 aa).

The Nucleophile role is filled by S141. Residues D312 and H341 each act as charge relay system in the active site.

This sequence belongs to the AB hydrolase superfamily. Lipase family.

The polypeptide is Lipase member J (LIPJ) (Homo sapiens (Human)).